Here is a 442-residue protein sequence, read N- to C-terminus: Cell division protein FtsA (442 aa).

Positions 401 to 428 (VTSYDNDSYDAPEETVYDEPEQKKSDED) are disordered. The segment covering 407 to 419 (DSYDAPEETVYDE) has biased composition (acidic residues).

Belongs to the FtsA/MreB family. As to quaternary structure, self-interacts. Interacts with FtsZ.

Its subcellular location is the cell membrane. In terms of biological role, cell division protein that is involved in the assembly of the Z ring. May serve as a membrane anchor for the Z ring. In Enterococcus hirae, this protein is Cell division protein FtsA.